The primary structure comprises 188 residues: Putative manganese efflux pump MntP (188 aa).

6 helical membrane passes run 3 to 23 (ITATVLLAFGMSMDAFAASIG), 41 to 61 (LIFGAVETLTPLIGWGLGMLA), 66 to 86 (LEWNHWVAFILLVFLGIRMII), 107 to 129 (LLVTTAIATSLDAMAVGVGLAFL), 143 to 163 (ATLIMSTLGIMVGRFIGPLLG), and 168 to 188 (ILGGAVLIGIGAQILWTHFHG).

The protein belongs to the MntP (TC 9.B.29) family.

It is found in the cell inner membrane. Functionally, probably functions as a manganese efflux pump. In Citrobacter koseri (strain ATCC BAA-895 / CDC 4225-83 / SGSC4696), this protein is Putative manganese efflux pump MntP.